The chain runs to 472 residues: P2X purinoceptor 2 (472 aa).

The Cytoplasmic segment spans residues 1 to 34 (MVRRLARGCWSAFWDYETPKVIVVRNRRLGFVHR). 6 cysteine pairs are disulfide-bonded: cysteine 9–cysteine 430, cysteine 113–cysteine 164, cysteine 124–cysteine 147, cysteine 130–cysteine 158, cysteine 214–cysteine 224, and cysteine 258–cysteine 267. The chain crosses the membrane as a helical span at residues 35–52 (MVQLLILLYFVWYVFIVQ). The Extracellular segment spans residues 53 to 326 (KSYQDSETGP…IVHGQAGKFS (274 aa)). The ATP site is built by lysine 69 and lysine 71. A glycan (N-linked (GlcNAc...) asparagine) is linked at asparagine 182. ATP is bound at residue threonine 184. Residue asparagine 239 is glycosylated (N-linked (GlcNAc...) asparagine). Residues serine 284, asparagine 288, and arginine 290 each coordinate ATP. Residue asparagine 298 is glycosylated (N-linked (GlcNAc...) asparagine). ATP is bound at residue lysine 308. Residues 309 to 322 (AYGIRIDVIVHGQA) form a pore-forming motif region. Residues 327-347 (LIPTIINLATALTSIGVGSFL) traverse the membrane as a helical segment. The Cytoplasmic portion of the chain corresponds to 348–472 (CDWILLTFMN…STDPKGLAQL (125 aa)). Residues 393-472 (PPPSHYSQDQ…STDPKGLAQL (80 aa)) are disordered. The segment covering 456 to 465 (PSQQDSTSTD) has biased composition (polar residues).

The protein belongs to the P2X receptor family. Homotrimer and heterotrimer; functional P2XRs are organized as homomeric and heteromeric trimers. Homotrimer. Forms heterotrimer with P2RX1. Forms heterotrimer with P2RX6. Forms heterotrimer with P2RX3. As to expression, high levels in pituitary and vas deferens. Lower extent in spinal cord, bladder, brain, adrenal, testis, sensory epithelia from the inner ear.

Its subcellular location is the cell membrane. It carries out the reaction Ca(2+)(in) = Ca(2+)(out). It catalyses the reaction K(+)(in) = K(+)(out). The enzyme catalyses Na(+)(in) = Na(+)(out). Its activity is regulated as follows. Fast activation by external ATP. Exhibits slow desensitization during prolonged ATP activation. Not sensitive to the ATP agonist:alpha/beta-methylene-ATP. Its function is as follows. ATP-gated nonselective transmembrane cation channel permeable to potassium, sodium and calcium. Activation by extracellular ATP induces a variety of cellular responses, such as excitatory postsynaptic responses in sensory neurons, neuromuscular junctions (NMJ) formation, hearing, perception of taste and peristalsis. In the inner ear, regulates sound transduction and auditory neurotransmission, outer hair cell electromotility, inner ear gap junctions, and K(+) recycling. Mediates synaptic transmission between neurons and from neurons to smooth muscle. This is P2X purinoceptor 2 (P2rx2) from Rattus norvegicus (Rat).